Consider the following 385-residue polypeptide: O-phospho-L-seryl-tRNA:Cys-tRNA synthase (385 aa).

Pyridoxal 5'-phosphate-binding positions include 89–90 (AR), asparagine 195, and 218–220 (SGH). Lysine 221 carries the post-translational modification N6-(pyridoxal phosphate)lysine.

It belongs to the SepCysS family. Homodimer. Interacts with SepRS. Pyridoxal 5'-phosphate serves as cofactor.

It carries out the reaction O-phospho-L-seryl-tRNA(Cys) + hydrogen sulfide + H(+) = L-cysteinyl-tRNA(Cys) + phosphate. Converts O-phospho-L-seryl-tRNA(Cys) (Sep-tRNA(Cys)) to L-cysteinyl-tRNA(Cys) (Cys-tRNA(Cys)). This Methanococcus aeolicus (strain ATCC BAA-1280 / DSM 17508 / OCM 812 / Nankai-3) protein is O-phospho-L-seryl-tRNA:Cys-tRNA synthase.